Here is a 123-residue protein sequence, read N- to C-terminus: Small ribosomal subunit protein uS13 (123 aa).

Positions Gly-94–Lys-123 are disordered. Positions Ala-106–Lys-123 are enriched in basic residues.

The protein belongs to the universal ribosomal protein uS13 family. In terms of assembly, part of the 30S ribosomal subunit. Forms a loose heterodimer with protein S19. Forms two bridges to the 50S subunit in the 70S ribosome.

Its function is as follows. Located at the top of the head of the 30S subunit, it contacts several helices of the 16S rRNA. In the 70S ribosome it contacts the 23S rRNA (bridge B1a) and protein L5 of the 50S subunit (bridge B1b), connecting the 2 subunits; these bridges are implicated in subunit movement. Contacts the tRNAs in the A and P-sites. The polypeptide is Small ribosomal subunit protein uS13 (Mycoplasmopsis agalactiae (strain NCTC 10123 / CIP 59.7 / PG2) (Mycoplasma agalactiae)).